Reading from the N-terminus, the 396-residue chain is Flavohemoprotein (396 aa).

The Globin domain occupies 1–136 (MLDAQTIATV…LANVFINREA (136 aa)). Histidine 85 provides a ligand contact to heme b. Residues tyrosine 95 and glutamate 135 each act as charge relay system in the active site. The reductase stretch occupies residues 147-396 (GGWEGTRDFR…YECFGPHKVL (250 aa)). The FAD-binding FR-type domain occupies 150–255 (EGTRDFRIVA…VAPAGDFFMA (106 aa)). FAD contacts are provided by residues tyrosine 188 and 204-207 (RQYS). Position 268-273 (268-273 (GVGQTP)) interacts with NADP(+). Residue 389–392 (CFGP) participates in FAD binding.

It belongs to the globin family. Two-domain flavohemoproteins subfamily. The protein in the C-terminal section; belongs to the flavoprotein pyridine nucleotide cytochrome reductase family. Requires heme b as cofactor. FAD is required as a cofactor.

It carries out the reaction 2 nitric oxide + NADPH + 2 O2 = 2 nitrate + NADP(+) + H(+). It catalyses the reaction 2 nitric oxide + NADH + 2 O2 = 2 nitrate + NAD(+) + H(+). In terms of biological role, is involved in NO detoxification in an aerobic process, termed nitric oxide dioxygenase (NOD) reaction that utilizes O(2) and NAD(P)H to convert NO to nitrate, which protects the bacterium from various noxious nitrogen compounds. Therefore, plays a central role in the inducible response to nitrosative stress. The chain is Flavohemoprotein from Shigella flexneri.